Here is a 1377-residue protein sequence, read N- to C-terminus: DNA-directed RNA polymerase subunit beta (1377 aa).

Belongs to the RNA polymerase beta chain family. As to quaternary structure, the RNAP catalytic core consists of 2 alpha, 1 beta, 1 beta' and 1 omega subunit. When a sigma factor is associated with the core the holoenzyme is formed, which can initiate transcription.

It catalyses the reaction RNA(n) + a ribonucleoside 5'-triphosphate = RNA(n+1) + diphosphate. In terms of biological role, DNA-dependent RNA polymerase catalyzes the transcription of DNA into RNA using the four ribonucleoside triphosphates as substrates. The polypeptide is DNA-directed RNA polymerase subunit beta (Aromatoleum aromaticum (strain DSM 19018 / LMG 30748 / EbN1) (Azoarcus sp. (strain EbN1))).